A 216-amino-acid polypeptide reads, in one-letter code: ATP-dependent Clp protease proteolytic subunit (216 aa).

S120 serves as the catalytic Nucleophile. The active site involves H145.

The protein belongs to the peptidase S14 family. Fourteen ClpP subunits assemble into 2 heptameric rings which stack back to back to give a disk-like structure with a central cavity, resembling the structure of eukaryotic proteasomes.

The protein resides in the cytoplasm. The catalysed reaction is Hydrolysis of proteins to small peptides in the presence of ATP and magnesium. alpha-casein is the usual test substrate. In the absence of ATP, only oligopeptides shorter than five residues are hydrolyzed (such as succinyl-Leu-Tyr-|-NHMec, and Leu-Tyr-Leu-|-Tyr-Trp, in which cleavage of the -Tyr-|-Leu- and -Tyr-|-Trp bonds also occurs).. Its function is as follows. Cleaves peptides in various proteins in a process that requires ATP hydrolysis. Has a chymotrypsin-like activity. Plays a major role in the degradation of misfolded proteins. In Cupriavidus pinatubonensis (strain JMP 134 / LMG 1197) (Cupriavidus necator (strain JMP 134)), this protein is ATP-dependent Clp protease proteolytic subunit.